The primary structure comprises 378 residues: MVKLPPLSLYIHIPWCVQKCPYCDFNSHALKGEVPHDDYVQHLLNDLDNDVAYAQGREVKTIFIGGGTPSLLSGPAMQTLLDGVRARLPLAADAEITMEANPGTVEADRFVDYQRAGVNRISIGVQSFSEEKLKRLGRIHGPQEAKRAAKLASGLGLRSFNLDLMHGLPDQSLEEALGDLRQAIELNPPHLSWYQLTIEPNTLFGSRPPVLPDDDALWDIFEQGHQLLTAAGYQQYETSAYAKPGYQCQHNLNYWRFGDYIGIGCGAHGKVTFPDGRILRTTKTRHPRGFMQGRYLESQRDVEATDKPFEFFMNRFRLLEAAPRVEFIAYTGLCEDVIRPQLDEAIAQGYLTECADYWQITEHGKLFLNSLLELFLAE.

Residues 1–237 (MVKLPPLSLY…LTAAGYQQYE (237 aa)) enclose the Radical SAM core domain. Residue Tyr10 coordinates S-adenosyl-L-methionine. [4Fe-4S] cluster is bound by residues Cys16, Cys20, and Cys23. S-adenosyl-L-methionine contacts are provided by residues Gly66, 67–68 (GT), Glu99, Gln126, Arg138, and Asp163.

Belongs to the anaerobic coproporphyrinogen-III oxidase family. HemW subfamily. Binding of the [4Fe-4S] cofactor promotes dimerization. It depends on [4Fe-4S] cluster as a cofactor.

It localises to the cytoplasm. Functionally, probably acts as a heme chaperone, transferring heme to the NarI subunit of the respiratory enzyme nitrate reductase; transfer may be stimulated by NADH. Binds one molecule of heme per monomer, possibly covalently. Heme binding is not affected by either [4Fe-4S] or S-adenosyl-L-methionine (SAM)-binding. Does not have coproporphyrinogen III dehydrogenase activity in vitro. Binds 1 [4Fe-4S] cluster. The cluster is coordinated with 3 cysteines and an exchangeable S-adenosyl-L-methionine. The protein is Heme chaperone HemW of Escherichia coli (strain K12).